The sequence spans 167 residues: Gametocyte-specific factor 1 (167 aa).

Residue Ser8 is modified to Phosphoserine. CHHC U11-48K-type zinc fingers lie at residues 14–41 (LLQCPYDKNHQIRACRFPYHLIKCRKNH) and 48–75 (LATCPFNARHQVPRAEISHHISSCDDKS). Cys17, His23, His33, Cys37, Cys51, His57, His67, and Cys71 together coordinate Zn(2+).

It belongs to the UPF0224 (FAM112) family. Expressed abundantly in adult testis, at moderate levels in unfertilized eggs and ovaries and weakly in embryonic stem cells.

It localises to the cytoplasm. Its function is as follows. Required for spermatogenesis and is involved in the suppression of retrotransposon transcription in male germ cells. The protein is Gametocyte-specific factor 1 of Mus musculus (Mouse).